The sequence spans 303 residues: Probable 5-dehydro-4-deoxyglucarate dehydratase (303 aa).

Belongs to the DapA family.

It carries out the reaction 5-dehydro-4-deoxy-D-glucarate + H(+) = 2,5-dioxopentanoate + CO2 + H2O. Its pathway is carbohydrate acid metabolism; D-glucarate degradation; 2,5-dioxopentanoate from D-glucarate: step 2/2. This Pseudomonas putida (strain W619) protein is Probable 5-dehydro-4-deoxyglucarate dehydratase.